A 410-amino-acid chain; its full sequence is Imidazolonepropionase (410 aa).

2 residues coordinate Fe(3+): His73 and His75. His73 and His75 together coordinate Zn(2+). 4-imidazolone-5-propanoate-binding residues include Arg82, Tyr145, and His178. Tyr145 lines the N-formimidoyl-L-glutamate pocket. His243 contacts Fe(3+). His243 is a binding site for Zn(2+). Gln246 lines the 4-imidazolone-5-propanoate pocket. Asp318 contacts Fe(3+). Asp318 is a Zn(2+) binding site. N-formimidoyl-L-glutamate contacts are provided by Asn320 and Gly322. A 4-imidazolone-5-propanoate-binding site is contributed by Ser323.

It belongs to the metallo-dependent hydrolases superfamily. HutI family. Zn(2+) serves as cofactor. The cofactor is Fe(3+).

The protein localises to the cytoplasm. The enzyme catalyses 4-imidazolone-5-propanoate + H2O = N-formimidoyl-L-glutamate. The protein operates within amino-acid degradation; L-histidine degradation into L-glutamate; N-formimidoyl-L-glutamate from L-histidine: step 3/3. In terms of biological role, catalyzes the hydrolytic cleavage of the carbon-nitrogen bond in imidazolone-5-propanoate to yield N-formimidoyl-L-glutamate. It is the third step in the universal histidine degradation pathway. The protein is Imidazolonepropionase of Shewanella frigidimarina (strain NCIMB 400).